Here is a 166-residue protein sequence, read N- to C-terminus: 16S rRNA aminocarboxypropyltransferase (166 aa).

S-adenosyl-L-methionine contacts are provided by Thr17, Ile62, Leu84, Tyr99, and Ser103.

The protein belongs to the TDD superfamily. TSR3 family.

The protein resides in the cytoplasm. The catalysed reaction is an N(1)-methylpseudouridine in rRNA + S-adenosyl-L-methionine = N(1)-methyl-N(3)-[(3S)-3-amino-3-carboxypropyl]pseudouridine in rRNA + S-methyl-5'-thioadenosine + H(+). Functionally, aminocarboxypropyltransferase that catalyzes the aminocarboxypropyl transfer on pseudouridine corresponding to position 914 in M.jannaschii 16S rRNA. It constitutes the last step in biosynthesis of the hypermodified N1-methyl-N3-(3-amino-3-carboxypropyl) pseudouridine (m1acp3-Psi). This Saccharolobus islandicus (strain M.16.27) (Sulfolobus islandicus) protein is 16S rRNA aminocarboxypropyltransferase.